A 122-amino-acid polypeptide reads, in one-letter code: Alkaline proteinase inhibitor (122 aa).

The N-terminal stretch at 1-25 (MPRFSHLIGCVWQVLFVSAGAQAMA) is a signal peptide. The disordered stretch occupies residues 101–122 (QKEGEYTGRTPSGADVTLQRTN).

It belongs to the protease inhibitor I38 family.

It localises to the periplasm. Its function is as follows. Inhibitor of the alkaline protease. This Pseudomonas tolaasii protein is Alkaline proteinase inhibitor (inh).